Here is an 806-residue protein sequence, read N- to C-terminus: Phenylalanine--tRNA ligase beta subunit (806 aa).

The 116-residue stretch at 40-155 folds into the tRNA-binding domain; the sequence is NKGVKGVVVG…SDAEVGADAL (116 aa). A B5 domain is found at 409–484; that stretch reads VQERTVSVTA…RLYGYDHIPV (76 aa). Residues Asp-462, Asp-468, Glu-471, and Glu-472 each coordinate Mg(2+). One can recognise an FDX-ACB domain in the interval 712-805; sequence PRFPSMTRDM…VEEKFGAELR (94 aa).

Belongs to the phenylalanyl-tRNA synthetase beta subunit family. Type 1 subfamily. Tetramer of two alpha and two beta subunits. Mg(2+) is required as a cofactor.

It is found in the cytoplasm. The enzyme catalyses tRNA(Phe) + L-phenylalanine + ATP = L-phenylalanyl-tRNA(Phe) + AMP + diphosphate + H(+). The chain is Phenylalanine--tRNA ligase beta subunit from Bacillus cereus (strain ATCC 14579 / DSM 31 / CCUG 7414 / JCM 2152 / NBRC 15305 / NCIMB 9373 / NCTC 2599 / NRRL B-3711).